A 367-amino-acid chain; its full sequence is UDP-N-acetylglucosamine--N-acetylmuramyl-(pentapeptide) pyrophosphoryl-undecaprenol N-acetylglucosamine transferase (367 aa).

UDP-N-acetyl-alpha-D-glucosamine is bound by residues 22–24, asparagine 134, arginine 170, serine 198, isoleucine 253, and glutamine 298; that span reads TGG.

This sequence belongs to the glycosyltransferase 28 family. MurG subfamily.

Its subcellular location is the cell inner membrane. The catalysed reaction is di-trans,octa-cis-undecaprenyl diphospho-N-acetyl-alpha-D-muramoyl-L-alanyl-D-glutamyl-meso-2,6-diaminopimeloyl-D-alanyl-D-alanine + UDP-N-acetyl-alpha-D-glucosamine = di-trans,octa-cis-undecaprenyl diphospho-[N-acetyl-alpha-D-glucosaminyl-(1-&gt;4)]-N-acetyl-alpha-D-muramoyl-L-alanyl-D-glutamyl-meso-2,6-diaminopimeloyl-D-alanyl-D-alanine + UDP + H(+). It participates in cell wall biogenesis; peptidoglycan biosynthesis. In terms of biological role, cell wall formation. Catalyzes the transfer of a GlcNAc subunit on undecaprenyl-pyrophosphoryl-MurNAc-pentapeptide (lipid intermediate I) to form undecaprenyl-pyrophosphoryl-MurNAc-(pentapeptide)GlcNAc (lipid intermediate II). The sequence is that of UDP-N-acetylglucosamine--N-acetylmuramyl-(pentapeptide) pyrophosphoryl-undecaprenol N-acetylglucosamine transferase from Xylella fastidiosa (strain M23).